The following is a 790-amino-acid chain: Endonuclease MutS2 (790 aa).

Gly-334–Thr-341 provides a ligand contact to ATP. The Smr domain maps to Leu-713–His-788.

Belongs to the DNA mismatch repair MutS family. MutS2 subfamily. In terms of assembly, homodimer. Binds to stalled ribosomes, contacting rRNA.

In terms of biological role, endonuclease that is involved in the suppression of homologous recombination and thus may have a key role in the control of bacterial genetic diversity. Acts as a ribosome collision sensor, splitting the ribosome into its 2 subunits. Detects stalled/collided 70S ribosomes which it binds and splits by an ATP-hydrolysis driven conformational change. Acts upstream of the ribosome quality control system (RQC), a ribosome-associated complex that mediates the extraction of incompletely synthesized nascent chains from stalled ribosomes and their subsequent degradation. Probably generates substrates for RQC. In Caldanaerobacter subterraneus subsp. tengcongensis (strain DSM 15242 / JCM 11007 / NBRC 100824 / MB4) (Thermoanaerobacter tengcongensis), this protein is Endonuclease MutS2.